We begin with the raw amino-acid sequence, 249 residues long: Ribosomal RNA small subunit methyltransferase G (249 aa).

Residues Gly-88, Phe-93, 111–113 (DAT), 139–140 (AE), and Arg-158 each bind S-adenosyl-L-methionine.

Belongs to the methyltransferase superfamily. RNA methyltransferase RsmG family.

The protein localises to the cytoplasm. Its function is as follows. Specifically methylates the N7 position of a guanine in 16S rRNA. This is Ribosomal RNA small subunit methyltransferase G from Thermus thermophilus (strain ATCC BAA-163 / DSM 7039 / HB27).